Consider the following 1197-residue polypeptide: MRLHHLGPDFPEALVDELLEGNVVFLCGAGVSAPQLPNFRDLVLNVYNRLGEERTPAEDHAFQASRYEEVLGALSRRLVRSEDVIDAAAAELQVPANPDTAHHDVILRLSRDQVGRPIIVTTNFDTLFERSLMVSHSAAFATQESAAGQDIPAPGSARFTGVVHTHGRLTDDELNLSQTELVLTSAQYGEAYLRAGWAARFLFDLMRCRTLVLVGYTANDAPVRYILNVLEGDRERFTDLRRVYALSSSNGDPQAAAAPWQALAVEPLLFDPEGGNPYGPLWSSLEGLANLVENPDVRRREMIAAIVSGPVSETTDHDIRTLKWALGARADLFEHFITRCEDAAWFDTLAVVIRAFGERARAWMLARWFARGWDDKVRYLTAIKHLGRGSQEFSDAVFRELDQNRPQDAIWEKAWRLLAEAAAAASHDSLRDYQLRHRLNRGPVVESDLGHLVNAIGPRLTIEAPFRDEDPSEHPNQLSDIARFSMESEHQEFLRDVLASPAGNAENILRLLERGSQRLSCQLRTARDAELIGQVRDVTDFGVPSVVNHQQNQHRRGFVPLTVFITSALPMAAQANLEGTKRVVGGWRAEPFNLTTRLWMHALTHQALFTADEAIEALATSNEAAFWSFALEFVAIVRARIAQASGEAVERLVRRLLVEGPQRYADREQNADGIDWQDRARDRDIWVRLTAISEHVVLPQEAETLLHEIRERRTYLSREIDERDLFRTWSSGVRAVRGRTAQIVSAQPSERLTIADRLEESSDIEDREGWVEYCREDPVGAYAALRSHPLEIGVVARWATWLEIIPSRANMTSPEWLRVIQEAVELLGEADDEIVIALVGPLARIAEHSRQLQLALPANWWDRLWQAAEGEPDVDWGDDVETYDRVINSTGGSLAEALLQAISSQRENGDDVNAADFQRLQRMIVSMTYSGEMARAACVRYLSFVFSVSNEIALDHLRPFIAADNDEGRRLRGVLVEYNSFVADTEISFADLILQGVRESRQKDVSAANAASHLVRAVVASFDEPNVVRGISPQQARQTLREAAADIRVGALKIMTNWLEENPDDERAAAWTDLYGPTFQAIWPRDRSYLSNDVSKEVFSLATAAGTAFEAAVEALLPYVSTFEDDWLSLHDLERNNAELATRFPVAALRLVWAACGPPCKGRTSDIAAILDAVAAANPALAVDRRMHKLRLLAVSH.

This is an uncharacterized protein from Sinorhizobium fredii (strain NBRC 101917 / NGR234).